Here is a 199-residue protein sequence, read N- to C-terminus: Phosphatidylethanolamine N-methyltransferase (199 aa).

Residues 1-12 (MTRLLGYVDPLD) are Lumenal-facing. Positions 13 to 33 (PSFVAAVITITFNPLYWNVVA) form an intramembrane region, helical. Over 34–45 (RWEHKTRKLSRA) the chain is Lumenal. A helical membrane pass occupies residues 46–66 (FGSPYLACYSLSVTILLLNFL). At 67–93 (RSHCFTQAMLSQPRMESLDTPAAYSLG) the chain is on the cytoplasmic side. The helical transmembrane segment at 94–114 (LALLGLGVVLVLSSFFALGFA) threads the bilayer. An S-adenosyl-L-methionine-binding site is contributed by 98 to 100 (GLG). The Lumenal segment spans residues 115-157 (GTFLGDYFGILKEARVTVFPFNILDNPMYWGSTANYLGWAIMH). The helical transmembrane segment at 158-178 (ASPTGLLLTVLVALTYIVALL) threads the bilayer. The Cytoplasmic portion of the chain corresponds to 179 to 199 (YEEPFTAEIYRQKASGSHKRS). S-adenosyl-L-methionine is bound at residue 180–181 (EE).

Belongs to the class VI-like SAM-binding methyltransferase superfamily. PEMT/PEM2 methyltransferase family. Post-translationally, isoform 2 is N-glycosylated with high-mannose oligosaccharides. Primarily expressed in liver (at protein level).

It is found in the endoplasmic reticulum. Its subcellular location is the endoplasmic reticulum membrane. The protein localises to the mitochondrion membrane. It catalyses the reaction a 1,2-diacyl-sn-glycero-3-phospho-N-methylethanolamine + S-adenosyl-L-methionine = a 1,2-diacyl-sn-glycero-3-phospho-N,N-dimethylethanolamine + S-adenosyl-L-homocysteine + H(+). The enzyme catalyses a 1,2-diacyl-sn-glycero-3-phospho-N,N-dimethylethanolamine + S-adenosyl-L-methionine = a 1,2-diacyl-sn-glycero-3-phosphocholine + S-adenosyl-L-homocysteine + H(+). The catalysed reaction is a 1,2-diacyl-sn-glycero-3-phosphoethanolamine + S-adenosyl-L-methionine = a 1,2-diacyl-sn-glycero-3-phospho-N-methylethanolamine + S-adenosyl-L-homocysteine + H(+). It carries out the reaction 1,2-di-(9Z-octadecenoyl)-sn-glycero-3-phosphoethanolamine + S-adenosyl-L-methionine = 1,2-di-(9Z-octadecenoyl)-sn-glycero-3-phospho-N-methylethanolamine + S-adenosyl-L-homocysteine + H(+). It catalyses the reaction 1,2-di-(9Z-octadecenoyl)-sn-glycero-3-phospho-N-methylethanolamine + S-adenosyl-L-methionine = 1,2-di-(9Z-octadecenoyl)-sn-glycero-3-phospho-N,N-dimethylethanolamine + S-adenosyl-L-homocysteine + H(+). The enzyme catalyses 1,2-di-(9Z-octadecenoyl)-sn-glycero-3-phospho-N,N-dimethylethanolamine + S-adenosyl-L-methionine = 1,2-di-(9Z-octadecenoyl)-sn-glycero-3-phosphocholine + S-adenosyl-L-homocysteine + H(+). The catalysed reaction is 1,2-di-(9Z,12Z-octadecadienoyl)-sn-glycero-3-phosphoethanolamine + S-adenosyl-L-methionine = 1,2-di-(9Z,12Z-octadecadienoyl)-sn-glycero-3-phospho-N-methylethanolamine + S-adenosyl-L-homocysteine + H(+). It carries out the reaction 1,2-di-(9Z,12Z-octadecadienoyl)-sn-glycero-3-phospho-N-methylethanolamine + S-adenosyl-L-methionine = 1,2-di-(9Z,12Z-octadecadienoyl)-sn-glycero-3-phospho-N,N-dimethylethanolamine + S-adenosyl-L-homocysteine + H(+). It catalyses the reaction 1,2-di-(9Z,12Z-octadecadienoyl)-sn-glycero-3-phospho-N,N-dimethylethanolamine + S-adenosyl-L-methionine = 1,2-di-(9Z,12Z-octadecadienoyl)-sn-glycero-3-phosphocholine + S-adenosyl-L-homocysteine + H(+). The enzyme catalyses 1,2-di-(9Z,12Z,15Z-octadecatrienoyl)-sn-glycero-3-phosphoethanolamine + S-adenosyl-L-methionine = 1,2-di-(9Z,12Z,15Z-octadecatrienoyl)-sn-glycero-3-phospho-N-methylethanolamine + S-adenosyl-L-homocysteine + H(+). The catalysed reaction is 1,2-di-(9Z,12Z,15Z-octadecatrienoyl)-sn-glycero-3-phospho-N-methylethanolamine + S-adenosyl-L-methionine = 1,2-di-(9Z,12Z,15Z-octadecatrienoyl)-sn-glycero-3-phospho-N,N-dimethylethanolamine + S-adenosyl-L-homocysteine + H(+). It carries out the reaction 1,2-di-(9Z,12Z,15Z-octadecatrienoyl)-sn-glycero-3-phospho-N,N-dimethylethanolamine + S-adenosyl-L-methionine = 1,2-di-(9Z,12Z,15Z-octadecatrienoyl)-sn-glycero-3-phosphocholine + S-adenosyl-L-homocysteine + H(+). It catalyses the reaction 1-hexadecanoyl-2-(4Z,7Z,10Z,13Z,16Z,19Z-docosahexaenoyl)-sn-glycero-3-phosphoethanolamine + S-adenosyl-L-methionine = 1-hexadecanoyl-2-(4Z,7Z,10Z,13Z,16Z,19Z-docosahexaenoyl)-sn-glycero-3-phospho-N-methylethanolamine + S-adenosyl-L-homocysteine + H(+). The enzyme catalyses 1-hexadecanoyl-2-(4Z,7Z,10Z,13Z,16Z,19Z-docosahexaenoyl)-sn-glycero-3-phospho-N-methylethanolamine + S-adenosyl-L-methionine = 1-hexadecanoyl-2-(4Z,7Z,10Z,13Z,16Z,19Z-docosahexaenoyl)-sn-glycero-3-phospho-N,N-dimethylethanolamine + S-adenosyl-L-homocysteine + H(+). The catalysed reaction is 1-hexadecanoyl-2-(4Z,7Z,10Z,13Z,16Z,19Z-docosahexaenoyl)-sn-glycero-3-phospho-N,N-dimethylethanolamine + S-adenosyl-L-methionine = 1-hexadecanoyl-2-(4Z,7Z,10Z,13Z,16Z,19Z-docosahexaenoyl)-sn-glycero-3-phosphocholine + S-adenosyl-L-homocysteine + H(+). The protein operates within phospholipid metabolism; phosphatidylcholine biosynthesis. Its activity is regulated as follows. The first methylation is rate-limiting. Catalyzes the three sequential steps of the methylation pathway for the biosynthesis of phosphatidylcholine, a critical and essential component for membrane structure. Uses S-adenosylmethionine (S-adenosyl-L-methionine, SAM or AdoMet) as the methyl group donor for the methylation of phosphatidylethanolamine (1,2-diacyl-sn-glycero-3-phosphoethanolamine, PE) to phosphatidylmonomethylethanolamine (1,2-diacyl-sn-glycero-3-phospho-N-methylethanolamine, PMME), PMME to phosphatidyldimethylethanolamine (1,2-diacyl-sn-glycero-3-phospho-N,N-dimethylethanolamine, PDME), and PDME to phosphatidylcholine (1,2-diacyl-sn-glycero-3-phosphocholine, PC), producing S-adenosyl-L-homocysteine in each step. Responsible for approximately 30% of hepatic PC with the CDP-choline pathway accounting for the other 70%. In terms of biological role, catalyzes the three sequential steps of the methylation of 1,2-diacyl-sn-glycero-3-phospho-N-methylethanolamine (PMME) to 1,2-diacyl-sn-glycero-3-phospho-N,N-dimethylethanolamine (PDME) more efficiently than isoform 2. Induces increase in PC species with longer polyunsaturated chains than isoform 2. Functionally, produces a higher increase in the level of PC species containing long chains with three double bonds than isoform 1. The sequence is that of Phosphatidylethanolamine N-methyltransferase from Homo sapiens (Human).